Reading from the N-terminus, the 273-residue chain is Putative phosphoenolpyruvate synthase regulatory protein (273 aa).

Glycine 154–threonine 161 is an ADP binding site.

Belongs to the pyruvate, phosphate/water dikinase regulatory protein family. PSRP subfamily.

It catalyses the reaction [pyruvate, water dikinase] + ADP = [pyruvate, water dikinase]-phosphate + AMP + H(+). The catalysed reaction is [pyruvate, water dikinase]-phosphate + phosphate + H(+) = [pyruvate, water dikinase] + diphosphate. Its function is as follows. Bifunctional serine/threonine kinase and phosphorylase involved in the regulation of the phosphoenolpyruvate synthase (PEPS) by catalyzing its phosphorylation/dephosphorylation. In Neisseria meningitidis serogroup C (strain 053442), this protein is Putative phosphoenolpyruvate synthase regulatory protein.